A 219-amino-acid polypeptide reads, in one-letter code: Claudin-3 (219 aa).

The Cytoplasmic portion of the chain corresponds to 1-8; the sequence is MSMGLEIT. Residues 9–29 form a helical membrane-spanning segment; sequence GTSLAVLGWLCTIVCCALPMW. At 30–80 the chain is on the extracellular side; the sequence is RVSAFIGSSIITAQITWEGLWMNCVVQSTGQMQCKMYDSLLALPQDLQAAR. The chain crosses the membrane as a helical span at residues 81–101; sequence ALIVVSILLAAFGLLVALVGA. Topologically, residues 102–115 are cytoplasmic; the sequence is QCTNCVQDETAKAK. The helical transmembrane segment at 116-136 threads the bilayer; sequence ITIVAGVLFLLAALLTLVPVS. Over 137–159 the chain is Extracellular; it reads WSANTIIRDFYNPLVPEAQKREM. The chain crosses the membrane as a helical span at residues 160 to 180; sequence GAGLYVGWAAAALQLLGGALL. Topologically, residues 181 to 219 are cytoplasmic; it reads CCSCPPRDKYAPTKILYSAPRSTGPGTGTGTAYDRKDYV. The residue at position 197 (Tyr197) is a Phosphotyrosine. Ser198 bears the Phosphoserine mark. The interval 218 to 219 is interactions with TJP1, TJP2 and TJP3; it reads YV.

The protein belongs to the claudin family. Can form homo- and heteropolymers with other CLDN. Homopolymers interact with CLDN1 and CLDN2 homopolymers. Interacts in cis (within the same plasma membrane) with CLDN19. Directly interacts with TJP1/ZO-1, TJP2/ZO-2 and TJP3/ZO-3. In terms of assembly, (Microbial infection) Interacts with Clostridium perfringens enterotoxin CPE; the interaction may disrupt claudin assembly in tight junctions. In terms of tissue distribution, expressed in the lung. Expressed at high levels in the liver and at lower levels, in kidney and testis.

Its subcellular location is the cell junction. The protein localises to the tight junction. The protein resides in the cell membrane. Functionally, plays a major role in tight junction-specific obliteration of the intercellular space, through calcium-independent cell-adhesion activity. This Mus musculus (Mouse) protein is Claudin-3 (Cldn3).